A 573-amino-acid chain; its full sequence is Putative ATP-dependent RNA helicase R563 (573 aa).

Residues 57 to 233 form the Helicase ATP-binding domain; the sequence is INPKTPYKGL…ALTMNLLVRN (177 aa). 70–77 lines the ATP pocket; the sequence is HRIGAGKT. Residues 179–182 carry the DEAH box motif; it reads DEVH. Residues 374–551 form the Helicase C-terminal domain; it reads KILRKIKRCN…AFEKALKEAA (178 aa).

This sequence belongs to the DEAD box helicase family. DEAH subfamily.

The protein localises to the virion. The catalysed reaction is ATP + H2O = ADP + phosphate + H(+). This Acanthamoeba polyphaga mimivirus (APMV) protein is Putative ATP-dependent RNA helicase R563.